An 848-amino-acid polypeptide reads, in one-letter code: Trimethylamine-N-oxide reductase 1 (848 aa).

Positions 1 to 39 (MNNNDLFQASRRRFLAQLGGLTVAGMLGTSLLTPRRATA) form a signal peptide, tat-type signal. Serine 191 lines the Mo-bis(molybdopterin guanine dinucleotide) pocket.

It belongs to the prokaryotic molybdopterin-containing oxidoreductase family. Mo-bis(molybdopterin guanine dinucleotide) serves as cofactor. Post-translationally, predicted to be exported by the Tat system. The position of the signal peptide cleavage has not been experimentally proven.

Its subcellular location is the periplasm. The catalysed reaction is trimethylamine + 2 Fe(III)-[cytochrome c] + H2O = trimethylamine N-oxide + 2 Fe(II)-[cytochrome c] + 3 H(+). Functionally, reduces trimethylamine-N-oxide (TMAO) into trimethylamine; an anaerobic reaction coupled to energy-yielding reactions. The polypeptide is Trimethylamine-N-oxide reductase 1 (torA) (Escherichia coli O6:H1 (strain CFT073 / ATCC 700928 / UPEC)).